A 1282-amino-acid polypeptide reads, in one-letter code: Clustered mitochondria protein homolog (1282 aa).

The interval 1–43 (MEQNNGTTEHPKEVLDQTNPSNEVTGVPNGNHAEGEGDQNAGE) is disordered. The Clu domain occupies 341–585 (DITRPQENYL…RITPLDVLWY (245 aa)). Basic and acidic residues-rich tracts occupy residues 631–641 (EAEEKAEESKP) and 653–669 (ESEK…RVDI). Disordered regions lie at residues 631-669 (EAEE…RVDI) and 892-936 (RSQL…PAPA). Low complexity predominate over residues 924–936 (QASPRPAQSPAPA). One copy of the TPR repeat lies at 1003-1036 (AKLYHQLSMLYYQSDDKDAAVELARKAVIVTERT). Positions 1202–1282 (ANLPTRLGTK…SKQSTVKPSS (81 aa)) are disordered. Positions 1212-1223 (PQPQVGQTTSEM) are enriched in polar residues. Residues 1257-1272 (TKQKKRAAARNPKLRG) are compositionally biased toward basic residues. A compositionally biased stretch (polar residues) spans 1273 to 1282 (SKQSTVKPSS).

This sequence belongs to the CLU family. May associate with the eukaryotic translation initiation factor 3 (eIF-3) complex.

The protein localises to the cytoplasm. In terms of biological role, mRNA-binding protein involved in proper cytoplasmic distribution of mitochondria. This Coccidioides immitis (strain RS) (Valley fever fungus) protein is Clustered mitochondria protein homolog.